Consider the following 2319-residue polypeptide: Coagulation factor VIII (2319 aa).

A signal peptide spans Met-1 to Ser-19. Plastocyanin-like domains follow at residues Ala-20–Cys-199 and Glu-207–Cys-349. An F5/8 type A 1 domain is found at Ala-20–Cys-349. Asn-61 carries N-linked (GlcNAc...) asparagine glycosylation. Cysteines 173 and 199 form a disulfide. N-linked (GlcNAc...) asparagine glycosylation is found at Asn-233 and Asn-259. Tyr-367 carries the post-translational modification Sulfotyrosine. 2 Plastocyanin-like domains span residues Lys-399–Cys-573 and Asn-583–Cys-730. Residues Lys-399–Cys-730 enclose the F5/8 type A 2 domain. Residue Asn-423 is glycosylated (N-linked (GlcNAc...) asparagine). Cysteines 547 and 573 form a disulfide. A glycan (N-linked (GlcNAc...) asparagine) is linked at Asn-601. Sulfotyrosine is present on residues Tyr-737, Tyr-738, and Tyr-742. The b stretch occupies residues Ser-760 to Arg-1640. N-linked (GlcNAc...) asparagine glycosylation is found at Asn-880, Asn-958, Asn-1015, Asn-1022, Asn-1026, Asn-1044, Asn-1076, Asn-1087, Asn-1136, Asn-1161, Asn-1192, Asn-1255, Asn-1268, Asn-1273, Asn-1274, Asn-1302, Asn-1316, Asn-1340, and Asn-1378. Residues Trp-1530–Asn-1549 form a disordered region. Positions His-1536–Lys-1548 are enriched in basic and acidic residues. 2 positions are modified to sulfotyrosine: Tyr-1669 and Tyr-1687. Plastocyanin-like domains are found at residues Lys-1683–Cys-1845 and Gly-1855–Cys-2008. An F5/8 type A 3 domain is found at Lys-1683–Cys-2008. Asn-1797 is a glycosylation site (N-linked (GlcNAc...) asparagine). 3 cysteine pairs are disulfide-bonded: Cys-1819–Cys-1845, Cys-2008–Cys-2156, and Cys-2161–Cys-2313. F5/8 type C domains lie at Cys-2008–Cys-2156 and Cys-2161–Cys-2313. N-linked (GlcNAc...) asparagine glycosylation occurs at Asn-2105.

The protein belongs to the multicopper oxidase family. Interacts with vWF. vWF binding is essential for the stabilization of F8 in circulation. In terms of processing, the binding of vWF and activation depend on the sulfation of Tyr-1669. Post-translationally, proteolytically cleaved by cathepsin CTSG to produce a partially activated form. As to expression, found in most tissues.

It localises to the secreted. Its subcellular location is the extracellular space. Functionally, factor VIII, along with calcium and phospholipid, acts as a cofactor for factor IXa when it converts factor X to the activated form, factor Xa. The chain is Coagulation factor VIII (F8) from Mus musculus (Mouse).